A 457-amino-acid chain; its full sequence is Protein N-terminal amidase (457 aa).

Positions 19–453 (LKVLVIQLNP…EGAILREVQF (435 aa)) constitute a CN hydrolase domain. Residue Glu-63 is the Proton acceptor of the active site. Lys-136 serves as the catalytic Proton donor. Catalysis depends on Cys-187, which acts as the Nucleophile.

This sequence belongs to the carbon-nitrogen hydrolase superfamily.

Functionally, deamidates N-terminal Asn and Gln. Component of a targeting complex in the N-end rule pathway. This is Protein N-terminal amidase (NTA1) from Saccharomyces cerevisiae (strain ATCC 204508 / S288c) (Baker's yeast).